Reading from the N-terminus, the 236-residue chain is Peroxisomal coenzyme A diphosphatase NUDT7 (236 aa).

K20 bears the N6-succinyllysine mark. Residues 37–169 enclose the Nudix hydrolase domain; sequence SNKFSVLVPL…QKQITQSGRD (133 aa). The Nudix box signature appears at 77 to 98; the sequence is KRDPVDTDDTATALREAQEEVG. Mg(2+) contacts are provided by E92 and E96. K178 is modified (N6-succinyllysine). Residues 234–236 carry the Microbody targeting signal motif; the sequence is SKL.

It belongs to the Nudix hydrolase family. PCD1 subfamily. Monomer. It depends on Mn(2+) as a cofactor. The cofactor is Mg(2+). In terms of tissue distribution, highly expressed in liver, brown adipose tissue and heart. Expressed at intermediate level in lung and kidney and at low level in brain. As to expression, expressed in liver, brown adipose tissue and heart at 20 times lower levels than isoform 1.

Its subcellular location is the peroxisome. It carries out the reaction hexanoyl-CoA + H2O = hexanoyl-4'-phosphopantetheine + adenosine 3',5'-bisphosphate + 2 H(+). It catalyses the reaction octanoyl-CoA + H2O = S-octanoyl-4'-phosphopantetheine + adenosine 3',5'-bisphosphate + 2 H(+). The catalysed reaction is butanoyl-CoA + H2O = S-butanoyl-4'-phosphopantetheine + adenosine 3',5'-bisphosphate + 2 H(+). The enzyme catalyses decanoyl-CoA + H2O = decanoyl-4'-phosphopantetheine + adenosine 3',5'-bisphosphate + 2 H(+). It carries out the reaction dodecanoyl-CoA + H2O = S-dodecanoyl-4'-phosphopantetheine + adenosine 3',5'-bisphosphate + 2 H(+). It catalyses the reaction tetradecanoyl-CoA + H2O = tetradecanoyl-4'-phosphopantetheine + adenosine 3',5'-bisphosphate + 2 H(+). The catalysed reaction is choloyl-CoA + H2O = S-choloyl-4'-phosphopantetheine + adenosine 3',5'-bisphosphate + 2 H(+). The enzyme catalyses 3alpha,7alpha,12alpha-trihydroxy-5beta-cholestan-26-oyl-CoA + H2O = 3alpha,7alpha,12alpha-trihydroxy-5beta-cholestan-26-oyl-4'-phosphopantetheine + adenosine 3',5'-bisphosphate + 2 H(+). It carries out the reaction acetyl-CoA + H2O = S-acetyl-4'-phosphopantetheine + adenosine 3',5'-bisphosphate + 2 H(+). It catalyses the reaction CoA + H2O = (R)-4'-phosphopantetheine + adenosine 3',5'-bisphosphate + 2 H(+). The catalysed reaction is propanoyl-CoA + H2O = propanoyl-4'-phosphopantetheine + adenosine 3',5'-bisphosphate + 2 H(+). The enzyme catalyses malonyl-CoA + H2O = malonyl-4'-phosphopantetheine + adenosine 3',5'-bisphosphate + 2 H(+). It carries out the reaction succinyl-CoA + H2O = succinyl-4'-phosphopantetheine + adenosine 3',5'-bisphosphate + 2 H(+). It catalyses the reaction a 5'-end CoA-ribonucleoside in mRNA + H2O = a 5'-end phospho-adenosine-phospho-ribonucleoside in mRNA + (R)-4'-phosphopantetheine + 2 H(+). Its activity is regulated as follows. Inhibited by fluoride. Its function is as follows. Fatty acyl-coenzyme A (CoA) diphosphatase that hydrolyzes fatty acyl-CoA to yield acyl-4'-phosphopantetheine and adenosine 3',5'-bisphosphate. Cleaves CoA, CoA esters and oxidized CoA with similar efficiencies. Preferentially hydrolyzes medium-chain acyl-CoAs and bile acid-CoAs. Has no activity toward NDP-sugars, CDP-alcohols, (deoxy)nucleoside 5'-triphosphates, nucleoside 5'-di or monophosphates, diadenosine polyphosphates, NAD, NADH, NADP, NADPH or thymidine-5'-monophospho-p-nitrophenyl ester. May be required to eliminate oxidized CoA from peroxisomes, or regulate CoA and acyl-CoA levels in this organelle in response to metabolic demand. Does not play a role in U8 snoRNA decapping activity. Binds U8 snoRNA. Exhibits decapping activity towards dpCoA-capped RNAs in vitro. This chain is Peroxisomal coenzyme A diphosphatase NUDT7, found in Mus musculus (Mouse).